Reading from the N-terminus, the 372-residue chain is Phospho-N-acetylmuramoyl-pentapeptide-transferase (372 aa).

The next 10 membrane-spanning stretches (helical) occupy residues 21–41 (SLTL…MIFG), 71–91 (TPTM…LLWA), 98–118 (VWIL…DDWL), 134–154 (YFWL…IATL), 176–196 (MIPF…YFVI), 211–231 (GLAI…AYVS), 251–271 (VIIV…FNAH), 275–295 (VFMG…IAVM), 300–320 (IAFA…MLQV), and 349–369 (QVVA…LMTL).

The protein belongs to the glycosyltransferase 4 family. MraY subfamily. The cofactor is Mg(2+).

Its subcellular location is the cell inner membrane. It catalyses the reaction UDP-N-acetyl-alpha-D-muramoyl-L-alanyl-gamma-D-glutamyl-meso-2,6-diaminopimeloyl-D-alanyl-D-alanine + di-trans,octa-cis-undecaprenyl phosphate = di-trans,octa-cis-undecaprenyl diphospho-N-acetyl-alpha-D-muramoyl-L-alanyl-D-glutamyl-meso-2,6-diaminopimeloyl-D-alanyl-D-alanine + UMP. It participates in cell wall biogenesis; peptidoglycan biosynthesis. In terms of biological role, catalyzes the initial step of the lipid cycle reactions in the biosynthesis of the cell wall peptidoglycan: transfers peptidoglycan precursor phospho-MurNAc-pentapeptide from UDP-MurNAc-pentapeptide onto the lipid carrier undecaprenyl phosphate, yielding undecaprenyl-pyrophosphoryl-MurNAc-pentapeptide, known as lipid I. This chain is Phospho-N-acetylmuramoyl-pentapeptide-transferase, found in Psychrobacter arcticus (strain DSM 17307 / VKM B-2377 / 273-4).